Reading from the N-terminus, the 175-residue chain is Interferon a3 (175 aa).

The signal sequence occupies residues 1–23 (MYTMQSWSCIFLIICSMQSVCHC). A disulfide bond links cysteine 24 and cysteine 120.

This sequence belongs to the alpha/beta interferon family. In terms of tissue distribution, isoform 1 and isoform 2 are expressed in several tissues, including gill, spleen, intestine, kidney and skin.

The protein resides in the secreted. The protein localises to the cytoplasm. Its subcellular location is the cytosol. Functionally, key player in antiviral response. Induces expression of TLRs, including that of TLR3, TLR9 and TLR8a1, and that of cytosolic pattern recognition receptors, including RIGI, IFIH1/MDA5 and DHX58/LGP2. Also induces MX1 and its own expression. In the presence of intracellular IFNAR2 (iIFNAR2) and IFNAR1B, intracellular isoform 3 may mediate STAT1 and STAT2 phosphorylation and induction of EIF2AK2, MX1 and RSAD2. The protein is Interferon a3 of Oncorhynchus mykiss (Rainbow trout).